A 330-amino-acid chain; its full sequence is D-xylose-binding periplasmic protein (330 aa).

The signal sequence occupies residues 1–23 (MKIKNILLTLCTSLLLTNVAAHA).

It belongs to the bacterial solute-binding protein 2 family.

It is found in the periplasm. Involved in the high-affinity D-xylose membrane transport system. Binds with high affinity to xylose. The protein is D-xylose-binding periplasmic protein (xylF) of Escherichia coli (strain K12).